Here is a 182-residue protein sequence, read N- to C-terminus: ATP-dependent protease subunit HslV (182 aa).

Residue Thr-12 is part of the active site. Na(+) contacts are provided by Ala-167, Cys-170, and Thr-173.

Belongs to the peptidase T1B family. HslV subfamily. As to quaternary structure, a double ring-shaped homohexamer of HslV is capped on each side by a ring-shaped HslU homohexamer. The assembly of the HslU/HslV complex is dependent on binding of ATP.

The protein resides in the cytoplasm. It catalyses the reaction ATP-dependent cleavage of peptide bonds with broad specificity.. Allosterically activated by HslU binding. Its function is as follows. Protease subunit of a proteasome-like degradation complex believed to be a general protein degrading machinery. The protein is ATP-dependent protease subunit HslV of Chlorobium limicola (strain DSM 245 / NBRC 103803 / 6330).